We begin with the raw amino-acid sequence, 218 residues long: NAD(P)H-quinone oxidoreductase subunit I (218 aa).

2 consecutive 4Fe-4S ferredoxin-type domains span residues 55-84 and 95-124; these read GRIH…VDWV and RNYS…MTEE. [4Fe-4S] cluster-binding residues include cysteine 64, cysteine 67, cysteine 70, cysteine 74, cysteine 104, cysteine 107, cysteine 110, and cysteine 114. The segment at 179–218 is disordered; it reads LRAGKLPSQIIKELQADKSEEEGKNNSSDMVPNKLNSTNK. The span at 192 to 202 shows a compositional bias: basic and acidic residues; it reads LQADKSEEEGK. Polar residues predominate over residues 203 to 218; sequence NNSSDMVPNKLNSTNK.

This sequence belongs to the complex I 23 kDa subunit family. In terms of assembly, NDH-1 is composed of at least 11 different subunits. It depends on [4Fe-4S] cluster as a cofactor.

Its subcellular location is the cellular thylakoid membrane. The catalysed reaction is a plastoquinone + NADH + (n+1) H(+)(in) = a plastoquinol + NAD(+) + n H(+)(out). The enzyme catalyses a plastoquinone + NADPH + (n+1) H(+)(in) = a plastoquinol + NADP(+) + n H(+)(out). NDH-1 shuttles electrons from an unknown electron donor, via FMN and iron-sulfur (Fe-S) centers, to quinones in the respiratory and/or the photosynthetic chain. The immediate electron acceptor for the enzyme in this species is believed to be plastoquinone. Couples the redox reaction to proton translocation, and thus conserves the redox energy in a proton gradient. The sequence is that of NAD(P)H-quinone oxidoreductase subunit I from Prochlorococcus marinus (strain NATL2A).